The primary structure comprises 232 residues: Orotidine 5'-phosphate decarboxylase (232 aa).

Substrate is bound by residues Asp-14, Lys-36, 63–72 (DLKFHDIPNT), Thr-122, Arg-183, Gln-192, Gly-212, and Arg-213. The Proton donor role is filled by Lys-65.

It belongs to the OMP decarboxylase family. Type 1 subfamily. As to quaternary structure, homodimer.

It catalyses the reaction orotidine 5'-phosphate + H(+) = UMP + CO2. Its pathway is pyrimidine metabolism; UMP biosynthesis via de novo pathway; UMP from orotate: step 2/2. Its function is as follows. Catalyzes the decarboxylation of orotidine 5'-monophosphate (OMP) to uridine 5'-monophosphate (UMP). The protein is Orotidine 5'-phosphate decarboxylase of Psychrobacter arcticus (strain DSM 17307 / VKM B-2377 / 273-4).